Consider the following 822-residue polypeptide: Probable phosphoketolase (822 aa).

This sequence belongs to the XFP family. Thiamine diphosphate is required as a cofactor.

In Lactococcus lactis subsp. lactis (strain IL1403) (Streptococcus lactis), this protein is Probable phosphoketolase.